The following is a 235-amino-acid chain: Vacuolar protein sorting-associated protein 60.2 (235 aa).

Positions 1–30 (MKRIFGAKNNKEPPPSIQDASDRINKRGDS) are disordered. Over residues 20 to 30 (ASDRINKRGDS) the composition is skewed to basic and acidic residues. Positions 99 to 148 (LKDAQQTMTALKSANKELKGMMKTVKIQDIDNLQDDMMDLMDESSEIQET) form a coiled coil. The tract at residues 174 to 235 (DMGNETEADG…PAVPRASLRG (62 aa)) is disordered.

This sequence belongs to the SNF7 family.

The protein localises to the endosome. It is found in the multivesicular body membrane. Probable peripherally associated component of the endosomal sorting required for transport complex III (ESCRT-III) which is involved in multivesicular bodies (MVBs) formation and sorting of endosomal cargo proteins into MVBs. This chain is Vacuolar protein sorting-associated protein 60.2, found in Arabidopsis thaliana (Mouse-ear cress).